The chain runs to 153 residues: Cornifin-B (153 aa).

2 disordered regions span residues 1–35 (MSSH…PCVS) and 49–85 (CHPK…HPKA). 14 repeat units span residues 27 to 34 (PPPPEPCV), 35 to 42 (SQVKTPCD), 43 to 50 (TKVPEPCH), 51 to 58 (PKAPEPCH), 59 to 66 (PKAPEPCH), 67 to 74 (PKAPEPCH), 75 to 82 (PKAPEPCH), 83 to 90 (PKAPEPCH), 91 to 98 (PKAPEPCH), 99 to 106 (PKAPEPCH), 107 to 114 (PKAPEPCH), 115 to 122 (PKVPEPCL), 123 to 130 (PKAPEPCQ), and 131 to 138 (PIVPEPCP). A 14 X 8 AA approximate tandem repeats region spans residues 27–138 (PPPPEPCVSQ…CQPIVPEPCP (112 aa)).

This sequence belongs to the cornifin (SPRR) family. Expressed in fetal periderm, hair follicles and in the thickened epidermis of the lip and footpad. Also present in the epithelia of various tissues such as the penis, vagina, forestomach, tongue and esophagus.

It localises to the cytoplasm. Functionally, cross-linked envelope protein of keratinocytes. It is a keratinocyte protein that first appears in the cell cytosol, but ultimately becomes cross-linked to membrane proteins by transglutaminase. All that results in the formation of an insoluble envelope beneath the plasma membrane. The chain is Cornifin-B (Sprr1b) from Mus musculus (Mouse).